A 479-amino-acid polypeptide reads, in one-letter code: Sulfate adenylyltransferase subunit 1 (479 aa).

Residues 25-239 (KSLLRFLTCG…EVLETVDIQR (215 aa)) form the tr-type G domain. A G1 region spans residues 34 to 41 (GSVDDGKS). 34 to 41 (GSVDDGKS) is a GTP binding site. A G2 region spans residues 92–96 (GITID). The segment at 113–116 (DTPG) is G3. Residues 113–117 (DTPGH) and 168–171 (NKMD) contribute to the GTP site. The interval 168–171 (NKMD) is G4. The segment at 206–208 (SAL) is G5.

This sequence belongs to the TRAFAC class translation factor GTPase superfamily. Classic translation factor GTPase family. CysN/NodQ subfamily. As to quaternary structure, heterodimer composed of CysD, the smaller subunit, and CysN.

The enzyme catalyses sulfate + ATP + H(+) = adenosine 5'-phosphosulfate + diphosphate. Its pathway is sulfur metabolism; hydrogen sulfide biosynthesis; sulfite from sulfate: step 1/3. With CysD forms the ATP sulfurylase (ATPS) that catalyzes the adenylation of sulfate producing adenosine 5'-phosphosulfate (APS) and diphosphate, the first enzymatic step in sulfur assimilation pathway. APS synthesis involves the formation of a high-energy phosphoric-sulfuric acid anhydride bond driven by GTP hydrolysis by CysN coupled to ATP hydrolysis by CysD. The sequence is that of Sulfate adenylyltransferase subunit 1 from Salmonella arizonae (strain ATCC BAA-731 / CDC346-86 / RSK2980).